The sequence spans 132 residues: Ribonuclease P protein component (132 aa).

The protein belongs to the RnpA family. In terms of assembly, consists of a catalytic RNA component (M1 or rnpB) and a protein subunit.

It carries out the reaction Endonucleolytic cleavage of RNA, removing 5'-extranucleotides from tRNA precursor.. In terms of biological role, RNaseP catalyzes the removal of the 5'-leader sequence from pre-tRNA to produce the mature 5'-terminus. It can also cleave other RNA substrates such as 4.5S RNA. The protein component plays an auxiliary but essential role in vivo by binding to the 5'-leader sequence and broadening the substrate specificity of the ribozyme. In Marinomonas sp. (strain MWYL1), this protein is Ribonuclease P protein component.